The following is a 326-amino-acid chain: Vitamin B12 import system permease protein BtuC (326 aa).

9 helical membrane passes run 15–35 (WLLC…CAGE), 61–81 (LAVL…QALF), 88–108 (PGLL…VLLG), 112–132 (LPNW…TLIL), 146–166 (LLAG…AIYF), 184–204 (GGVD…LLWI), 240–260 (GWMV…GLVI), 274–294 (VLLP…DVVA), and 302–322 (ELPI…WLLL).

This sequence belongs to the binding-protein-dependent transport system permease family. FecCD subfamily. The complex is composed of two ATP-binding proteins (BtuD), two transmembrane proteins (BtuC) and a solute-binding protein (BtuF).

The protein localises to the cell inner membrane. Functionally, part of the ABC transporter complex BtuCDF involved in vitamin B12 import. Involved in the translocation of the substrate across the membrane. This is Vitamin B12 import system permease protein BtuC from Escherichia coli (strain SE11).